The primary structure comprises 251 residues: Small ribosomal subunit protein uS2 (251 aa).

A disordered region spans residues 232 to 251 (LQTGEEEMAAAEGESEQVEA). The span at 235-251 (GEEEMAAAEGESEQVEA) shows a compositional bias: acidic residues.

It belongs to the universal ribosomal protein uS2 family.

This chain is Small ribosomal subunit protein uS2, found in Geobacter metallireducens (strain ATCC 53774 / DSM 7210 / GS-15).